Reading from the N-terminus, the 313-residue chain is 4-diphosphocytidyl-2-C-methyl-D-erythritol kinase (313 aa).

The active site involves K27. P110–S120 contributes to the ATP binding site. The active site involves D152.

Belongs to the GHMP kinase family. IspE subfamily.

It catalyses the reaction 4-CDP-2-C-methyl-D-erythritol + ATP = 4-CDP-2-C-methyl-D-erythritol 2-phosphate + ADP + H(+). It participates in isoprenoid biosynthesis; isopentenyl diphosphate biosynthesis via DXP pathway; isopentenyl diphosphate from 1-deoxy-D-xylulose 5-phosphate: step 3/6. Its function is as follows. Catalyzes the phosphorylation of the position 2 hydroxy group of 4-diphosphocytidyl-2C-methyl-D-erythritol. The chain is 4-diphosphocytidyl-2-C-methyl-D-erythritol kinase from Histophilus somni (strain 129Pt) (Haemophilus somnus).